We begin with the raw amino-acid sequence, 505 residues long: MSAKIKADEISTIIKERIENFDLSVDVEETGKVISVADGVANVYGLKNVMAGEMVEFESGEKGMALNLEESSVGIVILGKTSGITEGSSVKRLKKLLRVPVGDALIGRVVNSLGEPIDAKGPIEATESRFVEEKAKGIMARKSVHEPLQTGIKAIDALVPIGRGQRELIIGDRQTGKTTVAIDTIINQKGQDVICIYVAIGQKQSTVAQVVKKLEEYGAMDYTIVVNAGASDAAALQYLAPYAGVTMGEYFRDNSRHALIIYDDLSKHAVAYREMSLILRRPPGREAYPGDVFYLHSRLLERASKLNDALGAGSLTALPIIETQAGDVSAYIPTNVISITDGQIFLESDLFNSGIRPAINVGLSVSRVGGAAQIKAIKQVSGTLRLDLAQYRELQAFAQFASDLDESSRKQLERGQKMVEVLKQPPYSPLPVENQVVIIFAGAKGYLDDVATANVTKFEAELYPYIEAKYPEIFEQIRTKKVIDKEVEEILHKALKDFKATFAAN.

171 to 178 (GDRQTGKT) is an ATP binding site.

This sequence belongs to the ATPase alpha/beta chains family. In terms of assembly, F-type ATPases have 2 components, CF(1) - the catalytic core - and CF(0) - the membrane proton channel. CF(1) has five subunits: alpha(3), beta(3), gamma(1), delta(1), epsilon(1). CF(0) has three main subunits: a(1), b(2) and c(9-12). The alpha and beta chains form an alternating ring which encloses part of the gamma chain. CF(1) is attached to CF(0) by a central stalk formed by the gamma and epsilon chains, while a peripheral stalk is formed by the delta and b chains.

Its subcellular location is the cell inner membrane. It catalyses the reaction ATP + H2O + 4 H(+)(in) = ADP + phosphate + 5 H(+)(out). Its function is as follows. Produces ATP from ADP in the presence of a proton gradient across the membrane. The alpha chain is a regulatory subunit. This chain is ATP synthase subunit alpha, found in Campylobacter concisus (strain 13826).